Reading from the N-terminus, the 71-residue chain is Small ribosomal subunit protein bS21 (71 aa).

It belongs to the bacterial ribosomal protein bS21 family.

The polypeptide is Small ribosomal subunit protein bS21 (Dichelobacter nodosus (strain VCS1703A)).